The chain runs to 465 residues: FAD-dependent monooxygenase pyr5 (465 aa).

Residues 1-16 (MRVLIIGGSIAGLTLA) form the signal peptide. 3 residues coordinate FAD: Glu30, Gly44, and Arg103. Tyr210 is a catalytic residue. Positions 306 and 319 each coordinate FAD. A helical membrane pass occupies residues 440 to 456 (PTFPLTVAGLCLVAIVI).

Belongs to the paxM FAD-dependent monooxygenase family. FAD is required as a cofactor.

The protein localises to the membrane. It carries out the reaction 4-hydroxy-3-[(2E,6E)-farnesyl]-6-(pyridin-3-yl)-2H-pyran-2-one + NADPH + O2 + H(+) = 2-oxo-3-[(8S)-epoxy-(2E,6E)-farnesyl]-6-(pyridin-3-yl)-2H-pyran-4-olate + NADP(+) + H2O. Its pathway is secondary metabolite biosynthesis; terpenoid biosynthesis. FAD-dependent monooxygenase; part of the gene cluster that mediates the biosynthesis of pyripyropene A, a specific human acyl-coenzyme A:cholesterol acyltransferase 2 inhibitor. The first step of the pathway is the synthesis of nicotinyl-CoA from nicotinic acid by the nicotinic acid-CoA ligase pyr1. Nicotinyl-CoA is then a substrate of polyketide synthase pyr2 to produce 4-hydroxy-6-(3-pyridinyl)-2H-pyran-2-one (HPPO) which is further prenylated by the polyprenyl transferase pyr6 to yield farnesyl-HPPO. The next steps consist of an epoxidation of farnesyl-HPPO to epoxyfarnesyl-HPPO by FAD-dependent monooxygenase pyr5 and a cyclization of the terpenoid portion by the terpene cyclase pyr4 to yield deacetyl-pyripyropene E. The 2 cytochrome P450 monooxygenases pyr3 and pyr9, and the 2 acetyltransferases pyr7 and pyr8 are involved in the conversion of deacetyl-pyripyropene E into pyripyropene A through several cycles of oxidation and acetylation steps. Pyr7 acetylates deacetyl-pyripyropene E to pyripyropene E which is oxidized to 11-deacetyl-pyripyropene O by pyr3, which is in turn acetylated into pyripyropene O by pyr8. Pyripyropene O is then oxidized to deacetyl-pyripyropene A by pyr9. Deacetyl-pyripyropene A is finally acetylated to pyripyropene A by pyr8. The sequence is that of FAD-dependent monooxygenase pyr5 from Aspergillus fumigatus (strain ATCC MYA-4609 / CBS 101355 / FGSC A1100 / Af293) (Neosartorya fumigata).